A 258-amino-acid chain; its full sequence is TLC domain-containing protein 4-A (258 aa).

6 helical membrane passes run 5–25 (LISY…FSAI), 52–72 (FVST…LAYD), 85–105 (FWVK…LLLL), 116–132 (YMVC…GYVL), 171–191 (PVLL…IAVI), and 212–232 (IGPQ…NVFW). Residues 43-245 (GKQCEWDSRF…IARGFYKVVK (203 aa)) form the TLC domain.

This sequence belongs to the TLCD4 family.

Its subcellular location is the membrane. The sequence is that of TLC domain-containing protein 4-A (tlcd4-a) from Xenopus laevis (African clawed frog).